The following is a 206-amino-acid chain: Putative type I restriction enzyme MpnIIP endonuclease subunit C-terminal part (206 aa).

The C-terminal section of a putative type I restriction enzyme that if reconstituted might recognize 5'-GAN(7)TAY-3' and cleave a random distance away. Subunit R is required for both nuclease and ATPase activities, but not for modification. The chain is Putative type I restriction enzyme MpnIIP endonuclease subunit C-terminal part from Mycoplasma pneumoniae (strain ATCC 29342 / M129 / Subtype 1) (Mycoplasmoides pneumoniae).